The primary structure comprises 383 residues: BRISC and BRCA1-A complex member 2 (383 aa).

Met1 carries the N-acetylmethionine modification. Position 2 is a phosphoserine (Ser2). UEV-like regions lie at residues 30-147 and 275-364; these read DATN…TLLE and IAAF…RAKA.

This sequence belongs to the BABAM2 family. As to quaternary structure, component of the ARISC complex, at least composed of UIMC1/RAP80, ABRAXAS1, BRCC3/BRCC36, BABAM2 and BABAM1/NBA1. Component of the BRCA1-A complex, at least composed of BRCA1, BARD1, UIMC1/RAP80, ABRAXAS1, BRCC3/BRCC36, BABAM2 and BABAM1/NBA1. In the BRCA1-A complex, interacts directly with ABRAXAS1, BRCC3/BRCC36 and BABAM1/NBA1. Binds polyubiquitin. Component of the BRISC complex, at least composed of ABRAXAS2, BRCC3/BRCC36, BABAM2 and BABAM1/NBA1. Identified in a complex with SHMT2 and the other subunits of the BRISC complex. Component of the BRCA1/BRCA2 containing complex (BRCC), which also contains BRCA1, BRCA2, BARD1, BRCC3/BRCC36 and RAD51. BRCC is a ubiquitin E3 ligase complex that enhances cellular survival following DNA damage. May interact with FAS and TNFRSF1A.

The protein localises to the cytoplasm. Its subcellular location is the nucleus. Functionally, component of the BRCA1-A complex, a complex that specifically recognizes 'Lys-63'-linked ubiquitinated histones H2A and H2AX at DNA lesions sites, leading to target the BRCA1-BARD1 heterodimer to sites of DNA damage at double-strand breaks (DSBs). The BRCA1-A complex also possesses deubiquitinase activity that specifically removes 'Lys-63'-linked ubiquitin on histones H2A and H2AX. In the BRCA1-A complex, it acts as an adapter that bridges the interaction between BABAM1/NBA1 and the rest of the complex, thereby being required for the complex integrity and modulating the E3 ubiquitin ligase activity of the BRCA1-BARD1 heterodimer. Component of the BRISC complex, a multiprotein complex that specifically cleaves 'Lys-63'-linked ubiquitin in various substrates. Within the BRISC complex, acts as an adapter that bridges the interaction between BABAM1/NBA1 and the rest of the complex, thereby being required for the complex integrity. The BRISC complex is required for normal mitotic spindle assembly and microtubule attachment to kinetochores via its role in deubiquitinating NUMA1. The BRISC complex plays a role in interferon signaling via its role in the deubiquitination of the interferon receptor IFNAR1; deubiquitination increases IFNAR1 activity by enhancing its stability and cell surface expression. Down-regulates the response to bacterial lipopolysaccharide (LPS) via its role in IFNAR1 deubiquitination. May play a role in homeostasis or cellular differentiation in cells of neural, epithelial and germline origins. May also act as a death receptor-associated anti-apoptotic protein, which inhibits the mitochondrial apoptotic pathway. May regulate TNF-alpha signaling through its interactions with TNFRSF1A; however these effects may be indirect. This Rattus norvegicus (Rat) protein is BRISC and BRCA1-A complex member 2.